A 512-amino-acid polypeptide reads, in one-letter code: Activin receptor type-2B (512 aa).

An N-terminal signal peptide occupies residues 1 to 18 (MTAPWVALALLWGSLCAG). Residues 19–137 (SGRGEAETRE…PPPTAPTLLT (119 aa)) are Extracellular-facing. Intrachain disulfides connect Cys-29–Cys-59, Cys-49–Cys-77, Cys-84–Cys-103, Cys-90–Cys-102, and Cys-104–Cys-109. N-linked (GlcNAc...) asparagine glycans are attached at residues Asn-42 and Asn-65. Residues 138–158 (VLAYSLLPIGGLSLIVLLAFW) form a helical membrane-spanning segment. Over 159–512 (MYRHRKPPYG…VDLPPKESSI (354 aa)) the chain is Cytoplasmic. In terms of domain architecture, Protein kinase spans 190-480 (LQLLEIKARG…AGCVEERVSL (291 aa)). Residues 196 to 204 (KARGRFGCV) and Lys-217 each bind ATP. The active-site Proton acceptor is Asp-321. Positions 491 to 512 (DCLVSLVTSVTNVDLPPKESSI) are interaction with DYNLT1.

This sequence belongs to the protein kinase superfamily. TKL Ser/Thr protein kinase family. TGFB receptor subfamily. As to quaternary structure, forms an activin receptor complex with activin type II receptors such as ACVR1B. Interacts with VPS39. Interacts with DYNLT1. Interacts with BMP3. Interacts with BMP2. Interacts with BMP6. It depends on Mg(2+) as a cofactor. Mn(2+) is required as a cofactor. In terms of processing, phosphorylated. Constitutive phosphorylation is in part catalyzed by its own kinase activity.

The protein localises to the cell membrane. The catalysed reaction is L-threonyl-[receptor-protein] + ATP = O-phospho-L-threonyl-[receptor-protein] + ADP + H(+). The enzyme catalyses L-seryl-[receptor-protein] + ATP = O-phospho-L-seryl-[receptor-protein] + ADP + H(+). Transmembrane serine/threonine kinase activin type-2 receptor forming an activin receptor complex with activin type-1 serine/threonine kinase receptors (ACVR1, ACVR1B or ACVR1c). Transduces the activin signal from the cell surface to the cytoplasm and is thus regulating many physiological and pathological processes including neuronal differentiation and neuronal survival, hair follicle development and cycling, FSH production by the pituitary gland, wound healing, extracellular matrix production, immunosuppression and carcinogenesis. Activin is also thought to have a paracrine or autocrine role in follicular development in the ovary. Within the receptor complex, the type-2 receptors act as a primary activin receptors (binds activin-A/INHBA, activin-B/INHBB as well as inhibin-A/INHA-INHBA). The type-1 receptors like ACVR1B act as downstream transducers of activin signals. Activin binds to type-2 receptor at the plasma membrane and activates its serine-threonine kinase. The activated receptor type-2 then phosphorylates and activates the type-1 receptor. Once activated, the type-1 receptor binds and phosphorylates the SMAD proteins SMAD2 and SMAD3, on serine residues of the C-terminal tail. Soon after their association with the activin receptor and subsequent phosphorylation, SMAD2 and SMAD3 are released into the cytoplasm where they interact with the common partner SMAD4. This SMAD complex translocates into the nucleus where it mediates activin-induced transcription. Inhibitory SMAD7, which is recruited to ACVR1B through FKBP1A, can prevent the association of SMAD2 and SMAD3 with the activin receptor complex, thereby blocking the activin signal. Activin signal transduction is also antagonized by the binding to the receptor of inhibin-B via the IGSF1 inhibin coreceptor. In Homo sapiens (Human), this protein is Activin receptor type-2B (ACVR2B).